The sequence spans 279 residues: Nitrate import permease protein NrtB (279 aa).

The next 5 helical transmembrane spans lie at 25–45 (FLPY…ISAI), 91–111 (VAIG…VLGM), 149–169 (AIFV…AVGI), 200–220 (VPYV…AIVA), and 249–269 (IILA…LVAW). Residues 84 to 267 (ILISLQRVAI…LVGLSLDRLV (184 aa)) form the ABC transmembrane type-1 domain.

Belongs to the binding-protein-dependent transport system permease family. CysTW subfamily. As to quaternary structure, the complex is composed of two ATP-binding proteins (NrtC and NrtD), two transmembrane proteins (NrtB) and a solute-binding protein (NrtA).

It is found in the cell inner membrane. In terms of biological role, part of the ABC transporter complex NrtABCD involved in nitrate uptake. The complex is probably also involved in nitrite transport. Probably responsible for the translocation of the substrate across the membrane. This is Nitrate import permease protein NrtB from Synechococcus elongatus (strain ATCC 33912 / PCC 7942 / FACHB-805) (Anacystis nidulans R2).